The sequence spans 199 residues: Prolactin (199 aa).

Cysteine 4 and cysteine 11 form a disulfide bridge. Phosphoserine occurs at positions 26, 34, and 90. Cystine bridges form between cysteine 58/cysteine 174 and cysteine 191/cysteine 199.

This sequence belongs to the somatotropin/prolactin family. In terms of assembly, interacts with PRLR.

Its subcellular location is the secreted. Its function is as follows. Prolactin acts primarily on the mammary gland by promoting lactation. The sequence is that of Prolactin (PRL) from Balaenoptera borealis (Sei whale).